The chain runs to 235 residues: Class B acid phosphatase (235 aa).

The first 22 residues, methionine 1–alanine 22, serve as a signal peptide directing secretion. The Nucleophile role is filled by aspartate 67. Mg(2+) is bound by residues aspartate 67 and aspartate 69. Catalysis depends on aspartate 69, which acts as the Proton donor. Substrate-binding positions include threonine 135 to glycine 136 and lysine 175. Aspartate 190 is a binding site for Mg(2+).

This sequence belongs to the class B bacterial acid phosphatase family. As to quaternary structure, homotetramer. It depends on Mg(2+) as a cofactor.

The protein localises to the periplasm. It catalyses the reaction a phosphate monoester + H2O = an alcohol + phosphate. Functionally, dephosphorylates several organic phosphate monoesters. Also has a phosphotransferase activity catalyzing the transfer of low-energy phosphate groups from organic phosphate monoesters to free hydroxyl groups of various organic compounds. The sequence is that of Class B acid phosphatase from Aggregatibacter actinomycetemcomitans serotype C (strain D11S-1) (Actinobacillus actinomycetemcomitans).